The following is a 308-amino-acid chain: Probable serine/threonine-protein kinase KIN28 homolog (308 aa).

A Protein kinase domain is found at 4-294 (YIRERRLGEG…CDDAIKHPYF (291 aa)). ATP-binding positions include 10-18 (LGEGTYAVI) and K46. Residue D139 is the Proton acceptor of the active site.

This sequence belongs to the protein kinase superfamily. CMGC Ser/Thr protein kinase family. CDC2/CDKX subfamily. Component of the TFIIH holo complex.

Its subcellular location is the nucleus. It catalyses the reaction [DNA-directed RNA polymerase] + ATP = phospho-[DNA-directed RNA polymerase] + ADP + H(+). Its function is as follows. Protein kinase component of transcription factor IIH (TFIIH) which phosphorylates the C-terminal domain of RNA polymerase II during transition from transcription to elongation after preinitiation complex (PIC) formation, thereby positively regulating transcription. Essential for both basal and activated transcription, and is involved in nucleotide excision repair (NER) of damaged DNA. This chain is Probable serine/threonine-protein kinase KIN28 homolog (KIN28), found in Encephalitozoon cuniculi (strain GB-M1) (Microsporidian parasite).